The following is a 553-amino-acid chain: Arginine--tRNA ligase (553 aa).

The 'HIGH' region motif lies at 130–140; that stretch reads ANPTGDLHIGH.

Belongs to the class-I aminoacyl-tRNA synthetase family. In terms of assembly, monomer.

Its subcellular location is the cytoplasm. The enzyme catalyses tRNA(Arg) + L-arginine + ATP = L-arginyl-tRNA(Arg) + AMP + diphosphate. The sequence is that of Arginine--tRNA ligase from Staphylococcus aureus (strain MSSA476).